A 326-amino-acid polypeptide reads, in one-letter code: Ribonuclease Z (326 aa).

Zn(2+)-binding residues include His62, His64, Asp66, His67, His140, Asp211, and His269. The active-site Proton acceptor is the Asp66.

It belongs to the RNase Z family. As to quaternary structure, homodimer. Zn(2+) serves as cofactor.

It carries out the reaction Endonucleolytic cleavage of RNA, removing extra 3' nucleotides from tRNA precursor, generating 3' termini of tRNAs. A 3'-hydroxy group is left at the tRNA terminus and a 5'-phosphoryl group is left at the trailer molecule.. Functionally, zinc phosphodiesterase, which displays some tRNA 3'-processing endonuclease activity. Probably involved in tRNA maturation, by removing a 3'-trailer from precursor tRNA. In Synechocystis sp. (strain ATCC 27184 / PCC 6803 / Kazusa), this protein is Ribonuclease Z.